The primary structure comprises 410 residues: MSENIYDVLLERGFIEQATHEAETKELLGKEKVTFYIGFDATADSLTAGHFLTVMAMMHMQRAGHRPIALLGGGTTMIGDPTGKSDMRSMMTRETIDHNAQCFQEQLSKFIDFSDDKAIIANNADWLLNLNYVEFLREIGVHFSVNKMLTAECYKQRMEKGLTFFEFNYMLMQSYDFWVLYKKYGCKLQLGGNDQWSNILGGVDLIRRKEQAPAFGLTFKLLTTSEGLKMGKTMKGAVWLNPEKTSPYEFYQYWRNIEDVKVEECLGLLTFLPMDEVRRLGALEGAEINHAKEVLAYEITKIVHGEEEAKKAQEAAKSLFAGGVTSEHMPTTTYSSAAFEEGIDLITMMIDAKLATSRSDARRNIEQGGVSVNDVKVTDFARKFKSNDFNDDGALLVKKGKKAYHLFRAE.

Tyrosine 36 is an L-tyrosine binding site. The 'HIGH' region signature appears at alanine 41–histidine 50. L-tyrosine contacts are provided by tyrosine 169 and glutamine 173. Positions lysine 229–threonine 233 match the 'KMSKS' region motif. Lysine 232 is an ATP binding site. Positions isoleucine 343–alanine 409 constitute an S4 RNA-binding domain.

It belongs to the class-I aminoacyl-tRNA synthetase family. TyrS type 1 subfamily. As to quaternary structure, homodimer.

It localises to the cytoplasm. The enzyme catalyses tRNA(Tyr) + L-tyrosine + ATP = L-tyrosyl-tRNA(Tyr) + AMP + diphosphate + H(+). Its function is as follows. Catalyzes the attachment of tyrosine to tRNA(Tyr) in a two-step reaction: tyrosine is first activated by ATP to form Tyr-AMP and then transferred to the acceptor end of tRNA(Tyr). This chain is Tyrosine--tRNA ligase, found in Lachnoclostridium phytofermentans (strain ATCC 700394 / DSM 18823 / ISDg) (Clostridium phytofermentans).